The primary structure comprises 119 residues: Ribonuclease P protein component (119 aa).

The protein belongs to the RnpA family. As to quaternary structure, consists of a catalytic RNA component (M1 or rnpB) and a protein subunit.

The enzyme catalyses Endonucleolytic cleavage of RNA, removing 5'-extranucleotides from tRNA precursor.. Its function is as follows. RNaseP catalyzes the removal of the 5'-leader sequence from pre-tRNA to produce the mature 5'-terminus. It can also cleave other RNA substrates such as 4.5S RNA. The protein component plays an auxiliary but essential role in vivo by binding to the 5'-leader sequence and broadening the substrate specificity of the ribozyme. The protein is Ribonuclease P protein component of Sodalis glossinidius (strain morsitans).